The following is a 210-amino-acid chain: Orotate phosphoribosyltransferase (210 aa).

Residues Arg94, Lys98, His100, and 120–128 (EDLISTGGS) contribute to the 5-phospho-alpha-D-ribose 1-diphosphate site. Residue Ser124 participates in orotate binding.

It belongs to the purine/pyrimidine phosphoribosyltransferase family. PyrE subfamily. Homodimer. Mg(2+) serves as cofactor.

The catalysed reaction is orotidine 5'-phosphate + diphosphate = orotate + 5-phospho-alpha-D-ribose 1-diphosphate. It participates in pyrimidine metabolism; UMP biosynthesis via de novo pathway; UMP from orotate: step 1/2. Its function is as follows. Catalyzes the transfer of a ribosyl phosphate group from 5-phosphoribose 1-diphosphate to orotate, leading to the formation of orotidine monophosphate (OMP). This chain is Orotate phosphoribosyltransferase, found in Bacillus cytotoxicus (strain DSM 22905 / CIP 110041 / 391-98 / NVH 391-98).